A 440-amino-acid polypeptide reads, in one-letter code: 5-hydroxytryptamine receptor 6 (440 aa).

Topologically, residues methionine 1–glycine 27 are extracellular. A helical transmembrane segment spans residues tryptophan 28 to cysteine 52. At threonine 53–asparagine 62 the chain is on the cytoplasmic side. Residues phenylalanine 63–leucine 88 traverse the membrane as a helical segment. The Extracellular portion of the chain corresponds to tyrosine 89 to arginine 96. A helical transmembrane segment spans residues glycine 97 to leucine 122. Cysteine 99 and cysteine 180 are disulfide-bonded. Position 106 (aspartate 106) interacts with serotonin. The Cytoplasmic segment spans residues aspartate 123–arginine 142. A helical transmembrane segment spans residues alanine 143–histidine 167. The Extracellular portion of the chain corresponds to glutamate 168 to serine 185. Residues leucine 186–cysteine 209 traverse the membrane as a helical segment. Over arginine 210 to alanine 266 the chain is Cytoplasmic. The chain crosses the membrane as a helical span at residues serine 267 to valine 293. Asparagine 288 is a serotonin binding site. Residues cysteine 294–proline 299 are Extracellular-facing. The helical transmembrane segment at glycine 300–phenylalanine 323 threads the bilayer. The Cytoplasmic portion of the chain corresponds to methionine 324–asparagine 440. Residues alanine 346–leucine 392 form a disordered region. A compositionally biased stretch (polar residues) spans serine 347–serine 358. Over residues proline 362–proline 371 the composition is skewed to low complexity.

This sequence belongs to the G-protein coupled receptor 1 family. As to quaternary structure, interacts with MTOR, RPTOR and NF1. Interacts with CDK5.

The protein localises to the cell membrane. Functionally, G-protein coupled receptor for 5-hydroxytryptamine (serotonin), a biogenic hormone that functions as a neurotransmitter, a hormone and a mitogen. Also has a high affinity for tricyclic psychotropic drugs. Ligand binding causes a conformation change that triggers signaling via guanine nucleotide-binding proteins (G proteins) and modulates the activity of downstream effectors. HTR6 is coupled to G(s) G alpha proteins and mediates activation of adenylate cyclase activity. Controls pyramidal neurons migration during corticogenesis, through the regulation of CDK5 activity. Is an activator of mTOR signaling. This is 5-hydroxytryptamine receptor 6 (HTR6) from Pan troglodytes (Chimpanzee).